Reading from the N-terminus, the 250-residue chain is Glycerol uptake facilitator protein-like 5 (250 aa).

2 consecutive transmembrane segments (helical) span residues 12 to 32 and 46 to 66; these read EFFG…NAFL and GGWL…AMMF. The NPA 1 signature appears at 75–77; the sequence is NPA. The next 3 membrane-spanning stretches (helical) occupy residues 85–105, 142–162, and 172–192; these read IGIF…LGAI, LNGF…AMGL, and IDIA…SLGG. The NPA 2 motif lies at 199–201; that stretch reads NPA. Residues 230–250 form a helical membrane-spanning segment; it reads VVAPIVGAVIGIWIYKIFFGL.

The protein belongs to the MIP/aquaporin (TC 1.A.8) family.

It is found in the cell membrane. In terms of biological role, probable transporter that facilitates the transmembrane diffusion of an unknown substrate. Is not permeable to water, dihydroxyacetone, glycerol, urea, H(2)O(2) and D/L-lactic acid. This chain is Glycerol uptake facilitator protein-like 5, found in Lactiplantibacillus plantarum (strain ATCC BAA-793 / NCIMB 8826 / WCFS1) (Lactobacillus plantarum).